Here is a 209-residue protein sequence, read N- to C-terminus: Probable GTP-binding protein EngB (209 aa).

The EngB-type G domain maps to T22–A198. The Mg(2+) site is built by S37 and T59.

This sequence belongs to the TRAFAC class TrmE-Era-EngA-EngB-Septin-like GTPase superfamily. EngB GTPase family. Requires Mg(2+) as cofactor.

In terms of biological role, necessary for normal cell division and for the maintenance of normal septation. This is Probable GTP-binding protein EngB from Neisseria gonorrhoeae.